A 458-amino-acid polypeptide reads, in one-letter code: Probable asparagine--tRNA ligase, cytoplasmic (458 aa).

Belongs to the class-II aminoacyl-tRNA synthetase family.

It is found in the cytoplasm. The catalysed reaction is tRNA(Asn) + L-asparagine + ATP = L-asparaginyl-tRNA(Asn) + AMP + diphosphate + H(+). This chain is Probable asparagine--tRNA ligase, cytoplasmic, found in Enterocytozoon bieneusi (strain H348) (Microsporidian parasite).